A 109-amino-acid polypeptide reads, in one-letter code: MTALVAYRNLWRAANIAFQGDAPVLAAARQQIRDNFREKSTLPANDPTIQPMIEKAEEVAKFLRHNLVQGQPQGNDSFKLRIHKDTERGDNDSIKTAGQGKSSGGCCQG.

Residues 68-109 (VQGQPQGNDSFKLRIHKDTERGDNDSIKTAGQGKSSGGCCQG) form a disordered region. Over residues 83–93 (HKDTERGDNDS) the composition is skewed to basic and acidic residues.

Belongs to the complex I LYR family. MZM1 subfamily. In terms of assembly, interacts with RIP1.

It is found in the mitochondrion matrix. Its function is as follows. Assembly factor required for Rieske Fe-S protein RIP1 incorporation into the cytochrome b-c1 (CIII) complex. Functions as a chaperone, binding to this subunit within the mitochondrial matrix and stabilizing it prior to its translocation and insertion into the late CIII dimeric intermediate within the mitochondrial inner membrane. Modulates the mitochondrial matrix zinc pool. The protein is Mitochondrial zinc maintenance protein 1, mitochondrial (MZM1) of Verticillium alfalfae (strain VaMs.102 / ATCC MYA-4576 / FGSC 10136) (Verticillium wilt of alfalfa).